A 215-amino-acid polypeptide reads, in one-letter code: Large ribosomal subunit protein uL3 (215 aa).

Residues 136–161 (GVSISHRSHGSTGQRQDPGKVFKGKK) form a disordered region. At Gln151 the chain carries N5-methylglutamine.

It belongs to the universal ribosomal protein uL3 family. In terms of assembly, part of the 50S ribosomal subunit. Forms a cluster with proteins L14 and L19. In terms of processing, methylated by PrmB.

One of the primary rRNA binding proteins, it binds directly near the 3'-end of the 23S rRNA, where it nucleates assembly of the 50S subunit. The protein is Large ribosomal subunit protein uL3 of Rickettsia akari (strain Hartford).